A 429-amino-acid chain; its full sequence is Gap junction gamma-2 protein (429 aa).

The Cytoplasmic portion of the chain corresponds to 1–25 (MTNMSWSFLTRLLEEIHNHSTFVGK). The chain crosses the membrane as a helical span at residues 26-46 (VWLTVLVVFRIVLTAVGGESI). Topologically, residues 47–78 (YSDEQTKFTCNTRQPGCDNVCYDAFAPLSHVR) are extracellular. A helical transmembrane segment spans residues 79-99 (FWVFQIVVISTPSVMYLGYAV). The Cytoplasmic segment spans residues 100–214 (HRLARASQDE…EGLMRVYVAQ (115 aa)). Residues 106-200 (SQDERRRASR…GPAGQHDGRR (95 aa)) are disordered. Basic residues predominate over residues 112-123 (RASRRRPSRRAP). Over residues 124-138 (RPPLPLPPPPHPGWP) the composition is skewed to pro residues. Residues 142-173 (DLGEEEPMLGLGEEDEDPGVAEGLGEDEEAED) show a composition bias toward acidic residues. Residues 215–235 (LVARAAFEVAFLVGQYLLYGF) traverse the membrane as a helical segment. At 236–263 (EVRPFFACSRQPCPHVVDCFVSRPTEKT) the chain is on the extracellular side. The helical transmembrane segment at 264-284 (VFLLVMYVVSCLCLLLNLCEM) threads the bilayer. Residues 285–429 (AHLGLGNAQD…SREGKTTVWI (145 aa)) lie on the Cytoplasmic side of the membrane. Disordered stretches follow at residues 296 to 316 (VRGR…PPCA) and 361 to 429 (LGDL…TVWI). Residues 303-316 (PASPGPMPRPPPCA) are compositionally biased toward pro residues. Ser-366 is subject to Phosphoserine. The segment covering 372–395 (LPANARGPPKPGAPASGSGSATSG) has biased composition (low complexity).

Belongs to the connexin family. Gamma-type subfamily. In terms of assembly, a connexon is composed of a hexamer of connexins. Interacts with TJP1.

Its subcellular location is the cell membrane. It is found in the cell junction. The protein localises to the gap junction. Functionally, one gap junction consists of a cluster of closely packed pairs of transmembrane channels, the connexons, through which materials of low MW diffuse from one cell to a neighboring cell. May play a role in myelination in central and peripheral nervous systems. The chain is Gap junction gamma-2 protein (GJC2) from Bos taurus (Bovine).